Consider the following 278-residue polypeptide: Probable velvet family sexual development regulator SCHCODRAFT_28806 (278 aa).

In terms of domain architecture, Velvet spans 51–255 (GRTIRASLDE…ARVGVRLSVR (205 aa)). A disordered region spans residues 257–278 (TGKKATTKRRKRSDSFDEDDSS).

It belongs to the velvet family.

The protein resides in the nucleus. Functionally, velvet-domain-containing protein that probably acts as a positive regulator of sexual development. The chain is Probable velvet family sexual development regulator SCHCODRAFT_28806 from Schizophyllum commune (strain H4-8 / FGSC 9210) (Split gill fungus).